The primary structure comprises 163 residues: Probable metallophosphoesterase MG207 (163 aa).

Residues Asp-9, His-11, Asp-34, Asn-53, His-75, His-107, and His-109 each coordinate Mn(2+).

Belongs to the metallophosphoesterase superfamily. YfcE family. Mn(2+) is required as a cofactor.

The protein is Probable metallophosphoesterase MG207 of Mycoplasma genitalium (strain ATCC 33530 / DSM 19775 / NCTC 10195 / G37) (Mycoplasmoides genitalium).